The sequence spans 112 residues: MSGKRYPEEFKTEAVKQVVDLGYSVASVATRLDITTHSLYAWIKKYGPDSSTNKEQSDAQAEIRRLQKELKRVTDERDILKKAAVDSICQCNTPFNYLFRCFELQCLSRSVV.

Belongs to the transposase 8 family.

The sequence is that of Putative transposase YkgN (ykgN) from Escherichia coli (strain K12).